The following is a 74-amino-acid chain: Conotoxin ca17a (74 aa).

A signal peptide spans 1–20 (MQKATVLLLALLLLLPLSTA). Positions 21 to 40 (QDAEGSQEDAAQREVDIATR) are excised as a propeptide. Position 51 is a 4-hydroxyproline (proline 51).

In terms of processing, contains disulfide bonds. In terms of tissue distribution, expressed by the venom gland.

The protein resides in the secreted. The polypeptide is Conotoxin ca17a (Conus caracteristicus (Characteristic cone)).